Consider the following 342-residue polypeptide: S-adenosylmethionine:tRNA ribosyltransferase-isomerase (342 aa).

This sequence belongs to the QueA family. As to quaternary structure, monomer.

It is found in the cytoplasm. The catalysed reaction is 7-aminomethyl-7-carbaguanosine(34) in tRNA + S-adenosyl-L-methionine = epoxyqueuosine(34) in tRNA + adenine + L-methionine + 2 H(+). It functions in the pathway tRNA modification; tRNA-queuosine biosynthesis. In terms of biological role, transfers and isomerizes the ribose moiety from AdoMet to the 7-aminomethyl group of 7-deazaguanine (preQ1-tRNA) to give epoxyqueuosine (oQ-tRNA). This Campylobacter jejuni subsp. jejuni serotype O:23/36 (strain 81-176) protein is S-adenosylmethionine:tRNA ribosyltransferase-isomerase.